We begin with the raw amino-acid sequence, 378 residues long: 3-dehydroquinate synthase (378 aa).

Residues 115 to 119 (GVVGD), 139 to 140 (TS), Lys-152, and Lys-161 contribute to the NAD(+) site. Zn(2+) is bound by residues Glu-194, His-256, and His-275.

Belongs to the sugar phosphate cyclases superfamily. Dehydroquinate synthase family. It depends on Co(2+) as a cofactor. The cofactor is Zn(2+). NAD(+) is required as a cofactor.

The protein localises to the cytoplasm. The catalysed reaction is 7-phospho-2-dehydro-3-deoxy-D-arabino-heptonate = 3-dehydroquinate + phosphate. It participates in metabolic intermediate biosynthesis; chorismate biosynthesis; chorismate from D-erythrose 4-phosphate and phosphoenolpyruvate: step 2/7. Functionally, catalyzes the conversion of 3-deoxy-D-arabino-heptulosonate 7-phosphate (DAHP) to dehydroquinate (DHQ). The protein is 3-dehydroquinate synthase of Brucella abortus biovar 1 (strain 9-941).